A 172-amino-acid chain; its full sequence is Lipoprotein signal peptidase (172 aa).

The next 3 membrane-spanning stretches (helical) occupy residues L10–V30, W68–L88, and S98–M118. Catalysis depends on residues D124 and D142. A helical membrane pass occupies residues F138–F158.

This sequence belongs to the peptidase A8 family.

It localises to the cell inner membrane. It catalyses the reaction Release of signal peptides from bacterial membrane prolipoproteins. Hydrolyzes -Xaa-Yaa-Zaa-|-(S,diacylglyceryl)Cys-, in which Xaa is hydrophobic (preferably Leu), and Yaa (Ala or Ser) and Zaa (Gly or Ala) have small, neutral side chains.. It participates in protein modification; lipoprotein biosynthesis (signal peptide cleavage). In terms of biological role, this protein specifically catalyzes the removal of signal peptides from prolipoproteins. The sequence is that of Lipoprotein signal peptidase from Xanthomonas axonopodis pv. citri (strain 306).